The chain runs to 2320 residues: Sperm-associated antigen 17 (2320 aa).

2 stretches are compositionally biased toward basic and acidic residues: residues 139 to 171 (DQQR…EKKV) and 199 to 210 (RRGEDDEAKSYI). 11 disordered regions span residues 139–211 (DQQR…SYID), 388–407 (IPEP…KAQY), 682–739 (AEQD…SMDQ), 894–928 (SASK…EKDK), 950–1001 (EERL…AKTL), 1084–1118 (KEKE…EKVK), 1191–1221 (QGKG…EKKN), 1334–1367 (SSPD…KSET), 1393–1416 (DIIP…TTTP), 1983–2028 (KEAS…YENV), and 2080–2101 (TKES…EEPD). Polar residues predominate over residues 703 to 720 (VTGSTSNSTKPWNSSNRQ). A coiled-coil region spans residues 865 to 965 (EEAKYQEAKM…EKKAEKKGKD (101 aa)). Composition is skewed to basic and acidic residues over residues 914–928 (ELSD…EKDK) and 950–999 (EERL…EPAK). Over residues 1090 to 1103 (NSEEEEEEEEEKEE) the composition is skewed to acidic residues. Basic and acidic residues-rich tracts occupy residues 1104 to 1118 (VEEK…EKVK) and 1203 to 1221 (KHKD…EKKN). Polar residues-rich tracts occupy residues 2012-2028 (VNKS…YENV) and 2082-2094 (ESVS…NVTR).

In terms of assembly, interacts (via the C-terminus) with SPAG6; the interaction probably occurs on polymerized microtubules. As to expression, highly expressed in testis, round spermatids, testicular sperm, epididymal sperm and in condensing spermatids (at protein level). Expressed in organs that contain cilia-bearing cells including brain, oviduct, lung, and uterus. Expressed in articular cartilage and bone.

The protein resides in the cytoplasm. It is found in the cytoskeleton. Its subcellular location is the flagellum axoneme. The protein localises to the cytoplasmic vesicle. It localises to the secretory vesicle. The protein resides in the acrosome. It is found in the golgi apparatus. Its function is as follows. Component of the central pair apparatus of ciliary axonemes. Plays a critical role in the function and structure of motile cilia. May play a role in endochondral bone formation, most likely because of a function in primary cilia of chondrocytes and osteoblasts. Essential for normal spermatogenesis and male fertility. Required for normal manchette structure, transport of proteins along the manchette microtubules and formation of the sperm head and flagellum. Essential for sperm flagellum development and proper assembly of the respiratory motile cilia central pair apparatus, but not the brain ependymal cilia. The sequence is that of Sperm-associated antigen 17 (Spag17) from Mus musculus (Mouse).